The following is a 333-amino-acid chain: MTDAPNLKGFDARLREEAAEEPTLEIPEQPPTKKTQIIAIYGKGGSGKSFTLANLSHMMAEMGKRVLLIGCDPKSDTTSLLFGGKNCPTIIETATKKKLAGEEVKVGDVCFKSGGVFAMELGGPEVGRGCGGRGIIHGFELLEKLGFHDWDFDFVLLDFLGDVVCGGFGLPIARDMAQKVIVIGSNDLQSLYVANNVCNAVEYFRKLGGNVGVAGIVINKDDGTGEAQAFAREVGIPILAAIPADEELRRKSAAYQIVGSHATPWGKLFEELAGNVADAPPLRPRPLSPDALLALFETDEETRVVDLVPATDEDLRGSNAAPKKSLEVIYDDV.

Positions 1–22 (MTDAPNLKGFDARLREEAAEEP) are disordered. Residues 45-50 (GSGKSF) and Lys-74 each bind ATP. Mg(2+) is bound at residue Ser-49. Residues Cys-130 and Cys-165 each contribute to the [4Fe-4S] cluster site. 219–220 (NK) provides a ligand contact to ATP.

This sequence belongs to the NifH/BchL/ChlL family. Homodimer. Chlorophyllide reductase is composed of three subunits; BchX, BchY and BchZ. The cofactor is [4Fe-4S] cluster.

It catalyses the reaction 3-deacetyl-3-vinylbacteriochlorophyllide a + 2 oxidized [2Fe-2S]-[ferredoxin] + ADP + phosphate = chlorophyllide a + 2 reduced [2Fe-2S]-[ferredoxin] + ATP + H2O + H(+). The catalysed reaction is bacteriochlorophyllide a + 2 oxidized [2Fe-2S]-[ferredoxin] + ADP + phosphate = 3-acetyl-3-devinylchlorophyllide a + 2 reduced [2Fe-2S]-[ferredoxin] + ATP + H2O + H(+). The enzyme catalyses 3-deacetyl-3-(1-hydroxyethyl)bacteriochlorophyllide a + 2 oxidized [2Fe-2S]-[ferredoxin] + ADP + phosphate = 3-devinyl-3-(1-hydroxyethyl)chlorophyllide a + 2 reduced [2Fe-2S]-[ferredoxin] + ATP + H2O + H(+). It participates in porphyrin-containing compound metabolism; bacteriochlorophyll biosynthesis. Its function is as follows. Converts chlorophylls (Chl) into bacteriochlorophylls (BChl) by reducing ring B of the tetrapyrrole. This Rhodobacter capsulatus (strain ATCC BAA-309 / NBRC 16581 / SB1003) protein is Chlorophyllide reductase 35.5 kDa chain (bchX).